We begin with the raw amino-acid sequence, 1059 residues long: Carbamoyl phosphate synthase large chain (1059 aa).

Residues 1–401 (MPKRSDIKKI…SLLKACRSLE (401 aa)) form a carboxyphosphate synthetic domain region. Residues arginine 129, arginine 169, glycine 175, glycine 176, arginine 208, isoleucine 210, glutamate 215, glycine 241, isoleucine 242, histidine 243, glutamine 284, and glutamate 298 each coordinate ATP. One can recognise an ATP-grasp 1 domain in the interval 133-327 (KQLMEELEQP…IAKLAAKIAV (195 aa)). Glutamine 284, glutamate 298, and asparagine 300 together coordinate Mg(2+). Mn(2+) contacts are provided by glutamine 284, glutamate 298, and asparagine 300. The tract at residues 402 to 546 (IGVYHNEMSE…YSTYEWENES (145 aa)) is oligomerization domain. Residues 547-929 (IKSDKESVIV…ALYKAFEASY (383 aa)) form a carbamoyl phosphate synthetic domain region. The region spanning 671-861 (EQALKDLDIP…MAQVATNLIL (191 aa)) is the ATP-grasp 2 domain. Positions 707, 746, 748, 752, 777, 778, 779, 780, 820, and 832 each coordinate ATP. 3 residues coordinate Mg(2+): glutamine 820, glutamate 832, and asparagine 834. Mn(2+) is bound by residues glutamine 820, glutamate 832, and asparagine 834. In terms of domain architecture, MGS-like spans 930 to 1059 (LHLPTFGNVI…ESRSFTTEAI (130 aa)). An allosteric domain region spans residues 930 to 1059 (LHLPTFGNVI…ESRSFTTEAI (130 aa)).

The protein belongs to the CarB family. As to quaternary structure, composed of two chains; the small (or glutamine) chain promotes the hydrolysis of glutamine to ammonia, which is used by the large (or ammonia) chain to synthesize carbamoyl phosphate. Tetramer of heterodimers (alpha,beta)4. The cofactor is Mg(2+). Mn(2+) serves as cofactor.

It carries out the reaction hydrogencarbonate + L-glutamine + 2 ATP + H2O = carbamoyl phosphate + L-glutamate + 2 ADP + phosphate + 2 H(+). The catalysed reaction is hydrogencarbonate + NH4(+) + 2 ATP = carbamoyl phosphate + 2 ADP + phosphate + 2 H(+). The protein operates within amino-acid biosynthesis; L-arginine biosynthesis; carbamoyl phosphate from bicarbonate: step 1/1. It functions in the pathway pyrimidine metabolism; UMP biosynthesis via de novo pathway; (S)-dihydroorotate from bicarbonate: step 1/3. In terms of biological role, large subunit of the glutamine-dependent carbamoyl phosphate synthetase (CPSase). CPSase catalyzes the formation of carbamoyl phosphate from the ammonia moiety of glutamine, carbonate, and phosphate donated by ATP, constituting the first step of 2 biosynthetic pathways, one leading to arginine and/or urea and the other to pyrimidine nucleotides. The large subunit (synthetase) binds the substrates ammonia (free or transferred from glutamine from the small subunit), hydrogencarbonate and ATP and carries out an ATP-coupled ligase reaction, activating hydrogencarbonate by forming carboxy phosphate which reacts with ammonia to form carbamoyl phosphate. The chain is Carbamoyl phosphate synthase large chain from Streptococcus thermophilus (strain ATCC BAA-250 / LMG 18311).